The following is a 640-amino-acid chain: Isoniazid-induced protein IniA (640 aa).

Residues 497–519 (IGMLSSVVGLGLFNPLSVGAGLI) traverse the membrane as a helical segment. Residues 560-628 (RDRLKMIQRL…QVNDNLAGLE (69 aa)) adopt a coiled-coil conformation.

As to quaternary structure, forms multimeric structures containing a central pore.

The protein resides in the cell membrane. In terms of biological role, participates in the development of tolerance to both isoniazid and ethambutol. May function through a MDR-pump like mechanism, although it does not appear to directly transport isoniazid from the cell. This Mycobacterium tuberculosis (strain CDC 1551 / Oshkosh) protein is Isoniazid-induced protein IniA (iniA).